The primary structure comprises 493 residues: 6-aminohexanoate-cyclic-dimer hydrolase (493 aa).

Catalysis depends on charge relay system residues Lys-72 and Ser-150. Residue Ser-174 is the Acyl-ester intermediate of the active site.

This sequence belongs to the amidase family. In terms of assembly, homodimer.

The enzyme catalyses 1,8-diazacyclotetradecane-2,9-dione + H2O = N-(6-aminohexanoyl)-6-aminohexanoate. The protein operates within xenobiotic degradation; nylon-6 oligomer degradation. Functionally, catalyzes the hydrolysis of 6-aminohexanoic acid cyclic dimer (1,8-diazacyclotetradecane-2,9-dione) to form the linear dimer 6-aminohexanoyl-6-aminohexanoic acid. This chain is 6-aminohexanoate-cyclic-dimer hydrolase (nylA), found in Pseudomonas sp. (strain NK87).